The following is a 351-amino-acid chain: MSISSLSRKNIQALTPYQSARRLGGKGDIWLNANEYPTSPDFNLTHRTFNRYPEPQPQAVIEGYANYVGVTPENVLVSRGGDESIELIIRAFCEAEDSILYCPPTYGMYAVSAETCGIALKTVPLTADFQLNLPEIERQLTGVKVVFVCSPNNPTGTLVNRTDLLALLEMTRNKAIVVVDEAYIEFCPQATMVTELKNYPHLAIIRTLSKAFALAGLRCGFTLANKDLIEVLQKVIAPYPLPVPVADLAAQALQPAGLQAMQQRVQEILQNRTALEADLRSLPCVENVFQSDGNYLLVKFKDGQKIFKTLWDQGIILRNQHSALMLENCIRITIGTAEENRRVIEAIRKIA.

The residue at position 210 (Lys-210) is an N6-(pyridoxal phosphate)lysine.

This sequence belongs to the class-II pyridoxal-phosphate-dependent aminotransferase family. Histidinol-phosphate aminotransferase subfamily. As to quaternary structure, homodimer. Pyridoxal 5'-phosphate is required as a cofactor.

The catalysed reaction is L-histidinol phosphate + 2-oxoglutarate = 3-(imidazol-4-yl)-2-oxopropyl phosphate + L-glutamate. It participates in amino-acid biosynthesis; L-histidine biosynthesis; L-histidine from 5-phospho-alpha-D-ribose 1-diphosphate: step 7/9. In Pasteurella multocida (strain Pm70), this protein is Histidinol-phosphate aminotransferase 1 (hisC1).